Here is a 136-residue protein sequence, read N- to C-terminus: Large ribosomal subunit protein uL16 (136 aa).

The protein belongs to the universal ribosomal protein uL16 family. In terms of assembly, part of the 50S ribosomal subunit.

In terms of biological role, binds 23S rRNA and is also seen to make contacts with the A and possibly P site tRNAs. The chain is Large ribosomal subunit protein uL16 from Shewanella pealeana (strain ATCC 700345 / ANG-SQ1).